Here is a 376-residue protein sequence, read N- to C-terminus: Lipoyl synthase, mitochondrial (376 aa).

[4Fe-4S] cluster is bound by residues Cys102, Cys107, Cys113, Cys133, Cys137, Cys140, and Ser348. Residues 116–337 (GGEDKTATAT…EEVGGEMGFA (222 aa)) form the Radical SAM core domain.

It belongs to the radical SAM superfamily. Lipoyl synthase family. It depends on [4Fe-4S] cluster as a cofactor.

Its subcellular location is the mitochondrion. It carries out the reaction [[Fe-S] cluster scaffold protein carrying a second [4Fe-4S](2+) cluster] + N(6)-octanoyl-L-lysyl-[protein] + 2 oxidized [2Fe-2S]-[ferredoxin] + 2 S-adenosyl-L-methionine + 4 H(+) = [[Fe-S] cluster scaffold protein] + N(6)-[(R)-dihydrolipoyl]-L-lysyl-[protein] + 4 Fe(3+) + 2 hydrogen sulfide + 2 5'-deoxyadenosine + 2 L-methionine + 2 reduced [2Fe-2S]-[ferredoxin]. The protein operates within protein modification; protein lipoylation via endogenous pathway; protein N(6)-(lipoyl)lysine from octanoyl-[acyl-carrier-protein]: step 2/2. Functionally, catalyzes the radical-mediated insertion of two sulfur atoms into the C-6 and C-8 positions of the octanoyl moiety bound to the lipoyl domains of lipoate-dependent enzymes, thereby converting the octanoylated domains into lipoylated derivatives. The protein is Lipoyl synthase, mitochondrial of Branchiostoma floridae (Florida lancelet).